A 444-amino-acid chain; its full sequence is Histidinol dehydrogenase (444 aa).

NAD(+) contacts are provided by Y135, Q199, and N227. Substrate-binding residues include T250, Q272, and H275. Residues Q272 and H275 each coordinate Zn(2+). Residues E341 and H342 each act as proton acceptor in the active site. 4 residues coordinate substrate: H342, D375, E429, and H434. D375 serves as a coordination point for Zn(2+). H434 lines the Zn(2+) pocket.

Belongs to the histidinol dehydrogenase family. The cofactor is Zn(2+).

The catalysed reaction is L-histidinol + 2 NAD(+) + H2O = L-histidine + 2 NADH + 3 H(+). The protein operates within amino-acid biosynthesis; L-histidine biosynthesis; L-histidine from 5-phospho-alpha-D-ribose 1-diphosphate: step 9/9. Its function is as follows. Catalyzes the sequential NAD-dependent oxidations of L-histidinol to L-histidinaldehyde and then to L-histidine. This is Histidinol dehydrogenase (hisD) from Mycobacterium bovis (strain ATCC BAA-935 / AF2122/97).